The sequence spans 563 residues: 3-oxosteroid 1-dehydrogenase (563 aa).

Residue 7-36 (DVVVVGSGAAGMVAALVAAHRGLSTVVVEK) participates in FAD binding.

The protein belongs to the FAD-dependent oxidoreductase 2 family. 3-oxosteroid dehydrogenase subfamily. It depends on FAD as a cofactor.

The enzyme catalyses a 3-oxosteroid + A = a 3-oxo-Delta(1)-steroid + AH2. It catalyses the reaction a 3-oxo-Delta(4)-steroid + A = a 3-oxo-Delta(1,4)-steroid + AH2. It carries out the reaction 3-oxochol-4-en-22-oyl-CoA + NAD(+) = 3-oxochola-1,4-dien-22-oyl-CoA + NADH + H(+). In terms of biological role, involved in the degradation of cholesterol. Catalyzes the elimination of the C-1 and C-2 hydrogen atoms of the A-ring from the polycyclic ring structure of 3-ketosteroids. Has a clear preference for 3-ketosteroids with a saturated A-ring, displaying highest activity on 5alpha-AD (5alpha-androstane-3,17-dione) and 5alpha-T (5alpha-testosterone, also known as 17beta-hydroxy-5alpha-androstane-3-one). Is also involved in the formation of 3-keto-1,4-diene-steroid from 3-keto-4-ene-steroid. Catalyzes the conversion of 3-oxo-23,24-bisnorchol-4-en-22-oyl-coenzyme A thioester (4-BNC-CoA) to 3-oxo-23,24-bisnorchola-1,4-dien-22-oyl-coenzyme A thioester (1,4-BNC-CoA). The protein is 3-oxosteroid 1-dehydrogenase (kstD) of Mycobacterium tuberculosis (strain ATCC 25618 / H37Rv).